Consider the following 239-residue polypeptide: DNA oxidative demethylase ALKBH2 (239 aa).

A PCNA-binding motif is present at residues 3–7 (KFLVR). Residues 11–32 (RDLQGGGEEPAPTGGASGDLKS) form a disordered region. Residues 80-82 (FGK) and 100-102 (YTF) each bind substrate. In terms of domain architecture, Fe2OG dioxygenase spans 130–235 (TFNFVLVNRY…RVNLTFRKIL (106 aa)). The 2-oxoglutarate site is built by Asn-137, Tyr-139, and His-149. Positions 149 and 151 each coordinate Fe cation. Asp-152 serves as a coordination point for substrate. 2-oxoglutarate is bound by residues His-214, Arg-226, Thr-230, and Arg-232. His-214 is a binding site for Fe cation.

Belongs to the alkB family. In terms of assembly, interacts with PCNA homotrimer; this interaction is enhanced during the S-phase of the cell cycle. Interacts with nucleolar proteins NCL, UBTF and NPM1. Interacts with XRCC5-XRCC6 heterodimer. Fe(2+) is required as a cofactor. Detected in liver, testis and kidney (at protein level). Detected in heart and testis.

It is found in the nucleus. Its subcellular location is the nucleolus. The protein localises to the nucleoplasm. It catalyses the reaction a methylated nucleobase within DNA + 2-oxoglutarate + O2 = a nucleobase within DNA + formaldehyde + succinate + CO2. It carries out the reaction an N(1)-methyl-2'-deoxyadenosine in double-stranded DNA + 2-oxoglutarate + O2 = a 2'-deoxyadenosine in double-stranded DNA + formaldehyde + succinate + CO2 + H(+). The enzyme catalyses an N(1)-methyl-2'-deoxyadenosine in single-stranded DNA + 2-oxoglutarate + O2 = a 2'-deoxyadenosine in single-stranded DNA + formaldehyde + succinate + CO2 + H(+). The catalysed reaction is an N(3)-methyl-2'-deoxycytidine in double-stranded DNA + 2-oxoglutarate + O2 = a 2'-deoxycytidine in double-stranded DNA + formaldehyde + succinate + CO2 + H(+). It catalyses the reaction an N(3)-methyl-2'-deoxycytidine in single-stranded DNA + 2-oxoglutarate + O2 = a 2'-deoxycytidine in single-stranded DNA + formaldehyde + succinate + CO2 + H(+). It carries out the reaction a 1,N(6)-etheno-2'-deoxyadenosine in double-stranded DNA + 2-oxoglutarate + O2 + H2O = a 2'-deoxyadenosine in double-stranded DNA + glyoxal + succinate + CO2. The enzyme catalyses a 1,N(6)-etheno-2'-deoxyadenosine in single-stranded DNA + 2-oxoglutarate + O2 + H2O = a 2'-deoxyadenosine in single-stranded DNA + glyoxal + succinate + CO2. The catalysed reaction is a 3,N(4)-etheno-2'-deoxycytidine in double-stranded DNA + 2-oxoglutarate + O2 + H2O = a 2'-deoxycytidine in double-stranded DNA + glyoxal + succinate + CO2. It catalyses the reaction a 3,N(4)-etheno-2'-deoxycytidine in single-stranded DNA + 2-oxoglutarate + O2 + H2O = a 2'-deoxycytidine in single-stranded DNA + glyoxal + succinate + CO2. It carries out the reaction a 1,N(2)-etheno-2'-deoxyguanosine in double-stranded DNA + 2-oxoglutarate + O2 + H2O = a 2'-deoxyguanosine in double-stranded DNA + glyoxal + succinate + CO2. Activated by magnesium ions. Its function is as follows. Dioxygenase that repairs alkylated nucleic acid bases by direct reversal oxidative dealkylation. Can process both double-stranded (ds) and single-stranded (ss) DNA substrates, with a strong preference for dsDNA. Uses molecular oxygen, 2-oxoglutarate and iron as cofactors to oxidize the alkyl groups that are subsequently released as aldehydes, regenerating the undamaged bases. Probes the base pair stability, locates a weakened base pair and flips the damaged base to accommodate the lesion in its active site for efficient catalysis. Repairs monoalkylated bases, specifically N1-methyladenine and N3-methylcytosine, as well as higher order alkyl adducts such as bases modified with exocyclic bridged adducts known as etheno adducts including 1,N6-ethenoadenine, 3,N4-ethenocytosine and 1,N2-ethenoguanine. Acts as a gatekeeper of genomic integrity under alkylation stress. Efficiently repairs alkylated lesions in ribosomal DNA (rDNA). These lesions can cause ss- and dsDNA strand breaks that severely impair rDNA transcription. In a response mechanism to DNA damage, associates with PCNA at replication forks to repair alkylated adducts prior to replication. The sequence is that of DNA oxidative demethylase ALKBH2 (Alkbh2) from Mus musculus (Mouse).